The following is a 416-amino-acid chain: GTPase Obg (416 aa).

Residues Met-1–Ile-157 enclose the Obg domain. 2 disordered regions span residues Glu-25–Val-44 and Thr-62–Glu-82. The span at Gly-32–Gly-42 shows a compositional bias: gly residues. Basic and acidic residues predominate over residues Tyr-63–Arg-72. Residues Ala-158–Arg-324 enclose the OBG-type G domain. GTP contacts are provided by residues Gly-164–Ser-171, Phe-189–Ser-193, Asp-211–Gly-214, Asn-277–Asp-280, and Ser-305–Leu-307. 2 residues coordinate Mg(2+): Ser-171 and Thr-191. In terms of domain architecture, OCT spans Pro-336 to Pro-414.

Belongs to the TRAFAC class OBG-HflX-like GTPase superfamily. OBG GTPase family. As to quaternary structure, monomer. Mg(2+) serves as cofactor.

The protein localises to the cytoplasm. Its function is as follows. An essential GTPase which binds GTP, GDP and possibly (p)ppGpp with moderate affinity, with high nucleotide exchange rates and a fairly low GTP hydrolysis rate. Plays a role in control of the cell cycle, stress response, ribosome biogenesis and in those bacteria that undergo differentiation, in morphogenesis control. The protein is GTPase Obg of Thermus thermophilus (strain ATCC 27634 / DSM 579 / HB8).